Consider the following 411-residue polypeptide: Imidazolonepropionase (411 aa).

Residues H75 and H77 each coordinate Fe(3+). Zn(2+)-binding residues include H75 and H77. The 4-imidazolone-5-propanoate site is built by R84, Y147, and H180. An N-formimidoyl-L-glutamate-binding site is contributed by Y147. H245 provides a ligand contact to Fe(3+). A Zn(2+)-binding site is contributed by H245. Q248 contacts 4-imidazolone-5-propanoate. Residue D320 coordinates Fe(3+). A Zn(2+)-binding site is contributed by D320. Positions 322 and 324 each coordinate N-formimidoyl-L-glutamate. T325 contacts 4-imidazolone-5-propanoate.

It belongs to the metallo-dependent hydrolases superfamily. HutI family. It depends on Zn(2+) as a cofactor. Fe(3+) is required as a cofactor.

The protein localises to the cytoplasm. It catalyses the reaction 4-imidazolone-5-propanoate + H2O = N-formimidoyl-L-glutamate. Its pathway is amino-acid degradation; L-histidine degradation into L-glutamate; N-formimidoyl-L-glutamate from L-histidine: step 3/3. Functionally, catalyzes the hydrolytic cleavage of the carbon-nitrogen bond in imidazolone-5-propanoate to yield N-formimidoyl-L-glutamate. It is the third step in the universal histidine degradation pathway. This is Imidazolonepropionase from Aeromonas salmonicida (strain A449).